The sequence spans 86 residues: Large ribosomal subunit protein uL23 (86 aa).

It belongs to the universal ribosomal protein uL23 family. Part of the 50S ribosomal subunit. Contacts protein L29.

Functionally, binds to 23S rRNA. One of the proteins that surrounds the polypeptide exit tunnel on the outside of the ribosome. This Thermococcus sibiricus (strain DSM 12597 / MM 739) protein is Large ribosomal subunit protein uL23.